Reading from the N-terminus, the 87-residue chain is Exodeoxyribonuclease 7 small subunit (87 aa).

This sequence belongs to the XseB family. Heterooligomer composed of large and small subunits.

Its subcellular location is the cytoplasm. The catalysed reaction is Exonucleolytic cleavage in either 5'- to 3'- or 3'- to 5'-direction to yield nucleoside 5'-phosphates.. Functionally, bidirectionally degrades single-stranded DNA into large acid-insoluble oligonucleotides, which are then degraded further into small acid-soluble oligonucleotides. This Xanthomonas campestris pv. campestris (strain 8004) protein is Exodeoxyribonuclease 7 small subunit.